Consider the following 445-residue polypeptide: Argininosuccinate synthase (445 aa).

Residues 17-25 and alanine 43 contribute to the ATP site; that span reads AFSGGLDTS. Tyrosine 99 contributes to the L-citrulline binding site. Residues glycine 129 and threonine 131 each coordinate ATP. Positions 131, 135, and 136 each coordinate L-aspartate. An L-citrulline-binding site is contributed by asparagine 135. Aspartate 136 contacts ATP. L-citrulline is bound by residues arginine 139 and serine 192. Aspartate 194 contacts ATP. Residues threonine 201, glutamate 203, and glutamate 280 each coordinate L-citrulline.

It belongs to the argininosuccinate synthase family. Type 2 subfamily. In terms of assembly, homotetramer.

Its subcellular location is the cytoplasm. The catalysed reaction is L-citrulline + L-aspartate + ATP = 2-(N(omega)-L-arginino)succinate + AMP + diphosphate + H(+). It participates in amino-acid biosynthesis; L-arginine biosynthesis; L-arginine from L-ornithine and carbamoyl phosphate: step 2/3. This is Argininosuccinate synthase from Burkholderia cenocepacia (strain ATCC BAA-245 / DSM 16553 / LMG 16656 / NCTC 13227 / J2315 / CF5610) (Burkholderia cepacia (strain J2315)).